A 172-amino-acid polypeptide reads, in one-letter code: Translation initiation factor IF-3 (172 aa).

This sequence belongs to the IF-3 family. In terms of assembly, monomer.

Its subcellular location is the cytoplasm. IF-3 binds to the 30S ribosomal subunit and shifts the equilibrium between 70S ribosomes and their 50S and 30S subunits in favor of the free subunits, thus enhancing the availability of 30S subunits on which protein synthesis initiation begins. In Geobacillus stearothermophilus (Bacillus stearothermophilus), this protein is Translation initiation factor IF-3.